A 288-amino-acid chain; its full sequence is Glucose-1-phosphate thymidylyltransferase (288 aa).

The Mg(2+) site is built by aspartate 108 and aspartate 223.

The protein belongs to the glucose-1-phosphate thymidylyltransferase family. As to quaternary structure, homotetramer. Requires Mg(2+) as cofactor.

It carries out the reaction dTTP + alpha-D-glucose 1-phosphate + H(+) = dTDP-alpha-D-glucose + diphosphate. In terms of biological role, catalyzes the formation of dTDP-glucose, from dTTP and glucose 1-phosphate, as well as its pyrophosphorolysis. This is Glucose-1-phosphate thymidylyltransferase (rmlA1) from Neisseria meningitidis serogroup A / serotype 4A (strain DSM 15465 / Z2491).